We begin with the raw amino-acid sequence, 457 residues long: Argininosuccinate lyase (457 aa).

Belongs to the lyase 1 family. Argininosuccinate lyase subfamily.

The protein localises to the cytoplasm. It catalyses the reaction 2-(N(omega)-L-arginino)succinate = fumarate + L-arginine. It functions in the pathway amino-acid biosynthesis; L-arginine biosynthesis; L-arginine from L-ornithine and carbamoyl phosphate: step 3/3. The chain is Argininosuccinate lyase from Aquifex aeolicus (strain VF5).